Reading from the N-terminus, the 470-residue chain is MKQLSRKVTSNAHGQDSSYFLGWEEYEKNPYDEIKNPNGIIQMGLAENQLCFDLIETWLAKNPDAAGLKKDGQSIFKELALFQDYHGLPEFKKALAEFMEEIRGNRVTFDPSKIVLAAGSTSANETLMFCLAEPGDAFLLPTPYYPGFDRDLKWRTGAEIVPIHCSSSNGFQITESALQQAYQQAQKLDLKVKGVLVTNPSNPLGTMLTRRELNLLVDFITSKNIHLISDEIYSGTVFGFEQFVSVMDVLKDKNLENSEVSKRVHIVYSLSKDLGLPGFRVGAIYSNDEMVVSAATKMSSFGLVSSQTQYLLSALLSDKKFTSTYLDENQKRLKIRQKKLVSGLEAAGITCLKSNAGLFCWVDMRHLLDTNTFEAELELWKKIVYDVKLNISPGSSCHCTEPGWFRVCFANMSEDTLDLAMKRLKEYVESTDSRRVISKSSHDRIKSLRKRTVSNWVFRVSWTDRVPDER.

Residues glutamate 47 and tyrosine 85 each contribute to the substrate site. Lysine 272 is modified (N6-(pyridoxal phosphate)lysine).

This sequence belongs to the class-I pyridoxal-phosphate-dependent aminotransferase family. Homodimer and heterodimer. In vivo, the relevance of heterodimerization with other ACS enzymes is however unsure. Interacts (via its C-terminal region) with FEI1, FEI2, ETO1 and EOL1. It depends on pyridoxal 5'-phosphate as a cofactor. May be processed at its C-terminus. As to expression, expressed in roots and siliques.

It catalyses the reaction S-adenosyl-L-methionine = 1-aminocyclopropane-1-carboxylate + S-methyl-5'-thioadenosine + H(+). It participates in alkene biosynthesis; ethylene biosynthesis via S-adenosyl-L-methionine; ethylene from S-adenosyl-L-methionine: step 1/2. In terms of biological role, 1-aminocyclopropane-1-carboxylate synthase (ACS) enzymes catalyze the conversion of S-adenosyl-L-methionine (SAM) into 1-aminocyclopropane-1-carboxylate (ACC), a direct precursor of ethylene. The chain is 1-aminocyclopropane-1-carboxylate synthase 9 (ACS9) from Arabidopsis thaliana (Mouse-ear cress).